The primary structure comprises 126 residues: Small ribosomal subunit protein uS12 (126 aa).

Positions M1 to D26 are disordered. Position 89 is a 3-methylthioaspartic acid (D89). Positions D103–K126 are disordered. The span at A113–K126 shows a compositional bias: basic residues.

The protein belongs to the universal ribosomal protein uS12 family. As to quaternary structure, part of the 30S ribosomal subunit. Contacts proteins S8 and S17. May interact with IF1 in the 30S initiation complex.

Functionally, with S4 and S5 plays an important role in translational accuracy. Its function is as follows. Interacts with and stabilizes bases of the 16S rRNA that are involved in tRNA selection in the A site and with the mRNA backbone. Located at the interface of the 30S and 50S subunits, it traverses the body of the 30S subunit contacting proteins on the other side and probably holding the rRNA structure together. The combined cluster of proteins S8, S12 and S17 appears to hold together the shoulder and platform of the 30S subunit. This chain is Small ribosomal subunit protein uS12, found in Paraburkholderia xenovorans (strain LB400).